The chain runs to 475 residues: NADH-ubiquinone oxidoreductase chain 2 (475 aa).

Helical transmembrane passes span 45–65 (LAVL…GIQY), 82–102 (APIV…LTTT), 112–132 (IALL…VNDL), 133–153 (IPLY…TGVY), 162–182 (AAIL…LSSA), 198–220 (TYYS…ALVF), 240–260 (LYIT…FIYL), 262–282 (IHLF…AVAA), 291–311 (IKSI…TAVL), 318–338 (YIYI…ILAI), 365–385 (LCIA…LPGF), 402–422 (LEAL…AYII), and 447–467 (FIIS…PTLL).

This sequence belongs to the complex I subunit 2 family.

It localises to the mitochondrion inner membrane. It carries out the reaction a ubiquinone + NADH + 5 H(+)(in) = a ubiquinol + NAD(+) + 4 H(+)(out). Core subunit of the mitochondrial membrane respiratory chain NADH dehydrogenase (Complex I) that is believed to belong to the minimal assembly required for catalysis. Complex I functions in the transfer of electrons from NADH to the respiratory chain. The immediate electron acceptor for the enzyme is believed to be ubiquinone. The protein is NADH-ubiquinone oxidoreductase chain 2 (NAD2) of Candida albicans (strain SC5314 / ATCC MYA-2876) (Yeast).